The following is a 241-amino-acid chain: Zinc finger CCHC domain-containing protein 17 (241 aa).

An S1 motif domain is found at 16–88; that stretch reads YTIFQGEVAM…DRIKVSLSMK (73 aa). At Ser114 the chain carries Phosphoserine. The segment at 131-148 adopts a CCHC-type zinc-finger fold; that stretch reads TTCKKCGCKGHFAKDCFM. Residue Lys144 is modified to N6-acetyllysine. Residues 161-241 are disordered; that stretch reads EEEEKEEAKS…KKKHKKKHKE (81 aa). Positions 166 to 178 are enriched in basic and acidic residues; it reads EEAKSAEFEKPDP. A compositionally biased stretch (basic residues) spans 182–198; the sequence is PSRKRKKEKKKKKHRDR. Phosphoserine is present on Ser183. Residues 211–225 are compositionally biased toward basic and acidic residues; sequence DTGKRARHTSKDSKA. Residues 226 to 241 show a composition bias toward basic residues; it reads AKKKKKKKKHKKKHKE.

In terms of assembly, interacts with PNN. Associates with the 60S ribosomal subunit.

Its subcellular location is the nucleus. The protein localises to the nucleolus. The protein is Zinc finger CCHC domain-containing protein 17 (ZCCHC17) of Homo sapiens (Human).